The sequence spans 281 residues: MGFIKQYKTDFDIVDNQIVLSEQYFLRNKALFKKITGTRFGKVLGLSEYESSFKTWANMVKIYEDEFDETLAKAGNIIEPKIRDYVNLKTGFNFHSYDPKKVQFDLFKDDSVFGGIPDGEPLDENGELAYQNDLPMLEIKTTSCDSLIYKKINGNLKMILDENGMPIVKKKDGKKDSWFDSNGKIIISTLYYCQIGLYLYLRNVNKGLFAIAFLKPEDYVLPEQFNASNREIRLIPIKIDHKGFSVLVDKARIWYENYILTGKSPKLTESDIQWLKENGIE.

This is an uncharacterized protein from Mycoplasma genitalium (strain ATCC 33530 / DSM 19775 / NCTC 10195 / G37) (Mycoplasmoides genitalium).